The chain runs to 93 residues: MASTRGSGRPWSAKENKAFERALAVYDKDTPDRWANVARAVEGRTPEEVKKHYEILVEDIKYIESGKVPFPNYRTTGGNMKTDEKRFRNLKIR.

Positions 6 to 61 (GSGRPWSAKENKAFERALAVYDKDTPDRWANVARAVEGRTPEEVKKHYEILVEDIK) constitute an SANT domain.

As to expression, specifically expressed in the dorsal region of developing flowers.

The protein resides in the nucleus. In terms of biological role, involved in the dorsovental asymmetry of flowers. Promotes dorsal identity. The protein is Transcription factor RADIALIS (RAD) of Antirrhinum majus (Garden snapdragon).